A 583-amino-acid polypeptide reads, in one-letter code: Kelch-like protein 35 (583 aa).

Residues 41–119 (TDVVLRAGGR…VYGAGVRLRA (79 aa)) enclose the BTB domain. The BACK domain maps to 146–248 (LEGRLRAANS…LEHVRLPLLA (103 aa)). Kelch repeat units lie at residues 301–350 (VIVV…ALRN), 352–394 (VYVS…VVQG), 395–441 (QLFA…SCAG), 443–489 (LFVI…SLED), 490–531 (TIYV…VCDG), and 533–579 (VHIL…TIIQ).

The sequence is that of Kelch-like protein 35 (KLHL35) from Homo sapiens (Human).